The following is a 306-amino-acid chain: Small ribosomal subunit biogenesis GTPase RsgA (306 aa).

The 160-residue stretch at 77-236 (KNELKRPNVA…IVDTPGFSKL (160 aa)) folds into the CP-type G domain. GTP is bound by residues 126–129 (SKID) and 179–187 (GQTGVGKST). Residues C260, C266, H268, and C274 each coordinate Zn(2+).

The protein belongs to the TRAFAC class YlqF/YawG GTPase family. RsgA subfamily. Monomer. Associates with 30S ribosomal subunit, binds 16S rRNA. Zn(2+) serves as cofactor.

The protein localises to the cytoplasm. Its function is as follows. One of several proteins that assist in the late maturation steps of the functional core of the 30S ribosomal subunit. Helps release RbfA from mature subunits. May play a role in the assembly of ribosomal proteins into the subunit. Circularly permuted GTPase that catalyzes slow GTP hydrolysis, GTPase activity is stimulated by the 30S ribosomal subunit. The chain is Small ribosomal subunit biogenesis GTPase RsgA from Onion yellows phytoplasma (strain OY-M).